The following is an 808-amino-acid chain: Probable potassium transporter 3 (808 aa).

Residues 1–34 (MPVADCESGLSPADVTGAGAANGNPGHWRSYYRH) lie on the Cytoplasmic side of the membrane. A helical transmembrane segment spans residues 35–55 (VLLLAYQSCGVVYGDLSTSPL). The Extracellular segment spans residues 56–81 (YVYKSTFIIGSLRRFQDEEIVFGVFS). The chain crosses the membrane as a helical span at residues 82 to 102 (LVFWTLTLIPLLKYVFIVLAA). Residues 103-167 (DDNGEGGTFA…FLENHRKSRT (65 aa)) are Cytoplasmic-facing. The helical transmembrane segment at 168-188 (FLLVTVLFGASLVIGDGVLTP) threads the bilayer. Residues 189–204 (PMSVLSSFSGLQVHST) are Extracellular-facing. A helical transmembrane segment spans residues 205-225 (ALTSGEVEILSCTVLVCLFMV). The Cytoplasmic portion of the chain corresponds to 226-232 (QHWGTHR). A helical transmembrane segment spans residues 233–253 (VAFLFAPVVIVWLLLLGALGV). At 254 to 283 (YNIVVWNPRVLRALSPYYLVRFFQHTGKDG) the chain is on the extracellular side. A helical membrane pass occupies residues 284 to 304 (WISLGGILLSMTGTEAMYADL). The Cytoplasmic portion of the chain corresponds to 305 to 313 (GHFTAASIR). Residues 314 to 334 (VAFVGLIYPCLVLQYMGQAAF) traverse the membrane as a helical segment. Residues 335-354 (LSKSPHCDIHFVFFESIPTG) are Extracellular-facing. A helical transmembrane segment spans residues 355-375 (IFWPVLVIATLAAIVGSQAVI). Over 376-406 (SATFSIVRQCTALGCFPRVKIVHTSRRIHGQ) the chain is Cytoplasmic. Residues 407 to 427 (IYSPEINWILMLLCIAVTMGL) traverse the membrane as a helical segment. Topologically, residues 428 to 439 (RDTTLIGNAYGM) are extracellular. Residues 440 to 460 (ACAGVMLVTTLLMALVIVFVW) traverse the membrane as a helical segment. The Cytoplasmic segment spans residues 461–464 (QYSC). The chain crosses the membrane as a helical span at residues 465 to 485 (LVAALFLVAFGVVEAVYLSAA). The Extracellular portion of the chain corresponds to 486 to 491 (LMKVPQ). The helical transmembrane segment at 492-512 (GGWLPLVLSLVFVAVMYVWHY) threads the bilayer. Residues 513–808 (GTRRKHQFDV…LIEVGMIYYV (296 aa)) are Cytoplasmic-facing.

The protein belongs to the HAK/KUP transporter (TC 2.A.72.3) family.

The protein localises to the membrane. In terms of biological role, high-affinity potassium transporter. In Oryza sativa subsp. japonica (Rice), this protein is Probable potassium transporter 3 (HAK3).